We begin with the raw amino-acid sequence, 563 residues long: DNA repair protein rhp7 (563 aa).

Residues 1-101 (MSSGSRVRGP…TDEEAEDNED (101 aa)) form a disordered region. Over residues 39–59 (ESAGQSTGTESEVIQTPTSVE) the composition is skewed to polar residues. Residues 78–90 (VKRRNLRNQKKKK) are compositionally biased toward basic residues.

Belongs to the RAD7 family.

The protein localises to the nucleus. Functionally, involved in global genome repair (GGR) via nucleotide excision repair (NER), in conjunction with rhp16, after UV irradiation. This Schizosaccharomyces pombe (strain 972 / ATCC 24843) (Fission yeast) protein is DNA repair protein rhp7 (rhp7).